An 859-amino-acid polypeptide reads, in one-letter code: Envelope glycoprotein (859 aa).

The propeptide occupies 1–6 (MVSIAF). Residues 7–614 (YGGIPGGIST…KDLWSHIGNW (608 aa)) lie on the Extracellular side of the membrane. Residues N40, N112, N141, N148, N186, N214, N233, N244, N313, N340, N368, N399, N406, and N411 are each glycosylated (N-linked (GlcNAc...) asparagine; by host). Residues 446–466 (FGISAIVAAIVAATAIAASAT) form a fusion peptide region. N483 and N490 each carry an N-linked (GlcNAc...) asparagine; by host glycan. Residues 498–513 (LIERQIKILYAMILQT) form an immunosuppression region. Residues N550 and N557 are each glycosylated (N-linked (GlcNAc...) asparagine; by host). Coiled-coil stretches lie at residues 576 to 624 (ILTT…SIIK) and 663 to 699 (KKFH…YYKQ). A helical transmembrane segment spans residues 615-635 (IPGLGASIIKYIVMFLLIYLL). The Cytoplasmic portion of the chain corresponds to 636–859 (LTSSPKILRA…TSHVSMPQYV (224 aa)).

In terms of assembly, the mature envelope protein (Env) consists of a trimer of SU-TM heterodimers attached by noncovalent interactions or by a labile interchain disulfide bond. Specific enzymatic cleavages in vivo yield mature proteins. Envelope glycoproteins are synthesized as an inactive precursor that is N-glycosylated and processed likely by host cell furin or by a furin-like protease in the Golgi to yield the mature SU and TM proteins. The cleavage site between SU and TM requires the minimal sequence [KR]-X-[KR]-R.

The protein localises to the virion membrane. The protein resides in the host cell membrane. The surface protein (SU) attaches the virus to the host cell by binding to its receptor. This interaction triggers the refolding of the transmembrane protein (TM) and is thought to activate its fusogenic potential by unmasking its fusion peptide. Fusion occurs at the host cell plasma membrane. Functionally, the transmembrane protein (TM) acts as a class I viral fusion protein. Under the current model, the protein has at least 3 conformational states: pre-fusion native state, pre-hairpin intermediate state, and post-fusion hairpin state. During viral and target cell membrane fusion, the coiled coil regions (heptad repeats) assume a trimer-of-hairpins structure, positioning the fusion peptide in close proximity to the C-terminal region of the ectodomain. The formation of this structure appears to drive apposition and subsequent fusion of viral and target cell membranes. Membranes fusion leads to delivery of the nucleocapsid into the cytoplasm. The polypeptide is Envelope glycoprotein (env) (Equus asinus (Donkey)).